The chain runs to 176 residues: tRNA (adenine(37)-N6)-methyltransferase (176 aa).

Positions 1–94 (SFSHIWVQFV…YLPFVEAQPD (94 aa)) constitute a TsaA-like domain. S-adenosyl-L-methionine-binding positions include histidine 12, 12–13 (HG), arginine 40, leucine 50, and 74–77 (LDGT).

Belongs to the tRNA methyltransferase O family.

The enzyme catalyses N(6)-L-threonylcarbamoyladenosine(37) in tRNA + S-adenosyl-L-methionine = N(6)-methyl,N(6)-L-threonylcarbamoyladenosine(37) in tRNA + S-adenosyl-L-homocysteine + H(+). Its function is as follows. S-adenosyl-L-methionine-dependent methyltransferase responsible for the addition of the methyl group in the formation of N6-methyl-N6-threonylcarbamoyladenosine at position 37 (m(6)t(6)A37) of the tRNA anticodon loop of tRNA(Thr)(GGU). The methyl group of m(6)t(6)A37 appears to slightly improve the efficiency of the tRNA decoding ability. Binds to tRNA. This chain is tRNA (adenine(37)-N6)-methyltransferase, found in Eikenella corrodens.